The primary structure comprises 60 residues: Large ribosomal subunit protein bL32 (60 aa).

A disordered region spans residues 1–23; the sequence is MAVPKRKKSKSRRNMHRSHHAIK.

Belongs to the bacterial ribosomal protein bL32 family.

The sequence is that of Large ribosomal subunit protein bL32 from Wolbachia pipientis subsp. Culex pipiens (strain wPip).